The primary structure comprises 359 residues: Peptide chain release factor 1 (359 aa).

Gln-235 is subject to N5-methylglutamine.

It belongs to the prokaryotic/mitochondrial release factor family. Post-translationally, methylated by PrmC. Methylation increases the termination efficiency of RF1.

Its subcellular location is the cytoplasm. Peptide chain release factor 1 directs the termination of translation in response to the peptide chain termination codons UAG and UAA. This chain is Peptide chain release factor 1, found in Polynucleobacter asymbioticus (strain DSM 18221 / CIP 109841 / QLW-P1DMWA-1) (Polynucleobacter necessarius subsp. asymbioticus).